Reading from the N-terminus, the 385-residue chain is F-box only protein 4 (385 aa).

Phosphoserine occurs at positions 11 and 46. The region spanning 54-100 (TSALTRLPVDVQLYILSFLSPHDLCQLGSTDHYWNKTIRDPILWRYF) is the F-box domain.

Homodimer. Part of the SCF (SKP1-CUL1-F-box) E3 ubiquitin-protein ligase complex SCF(FBXO4) formed of CUL1, SKP1, RBX1 and FBXO4. Interacts with TERF1; this interaction is prevented in the presence of GNL3L. Identified in a complex with CRYAB and CCND1. Post-translationally, phosphorylation at Ser-11 varies during the cell cycle. It is low in resting cells and high in the S phase and the G2/M phase of the cell cycle. Phosphorylation is decreased during late G1 phase. Phosphorylation at Ser-11 is important for homodimerization and for optimal ubiquitin ligase activity towards CCND1.

The protein localises to the cytoplasm. It participates in protein modification; protein ubiquitination. Functionally, substrate recognition component of a SCF (SKP1-CUL1-F-box protein) E3 ubiquitin-protein ligase complex that mediates the ubiquitination and subsequent proteasomal degradation of target proteins. Promotes ubiquitination of cyclin-D1 (CCND1) and its subsequent proteasomal degradation. However, it does not act as a major regulator of CCND1 stability during the G1/S transition. Recognizes TERF1 and promotes its ubiquitination together with UBE2D1. Promotes ubiquitination of FXR1 following phosphorylation of FXR1 by GSK3B, leading to FXR1 degradation by the proteasome. This is F-box only protein 4 from Mus musculus (Mouse).